The chain runs to 398 residues: Acetate kinase (398 aa).

Asparagine 7 contributes to the Mg(2+) binding site. Lysine 14 contributes to the ATP binding site. Arginine 91 is a substrate binding site. Aspartate 148 acts as the Proton donor/acceptor in catalysis. ATP-binding positions include 208–212 (HIGNG), 283–285 (DMR), and 331–335 (GVGEN). Position 384 (glutamate 384) interacts with Mg(2+).

This sequence belongs to the acetokinase family. In terms of assembly, homodimer. Mg(2+) serves as cofactor. The cofactor is Mn(2+).

The protein localises to the cytoplasm. The catalysed reaction is acetate + ATP = acetyl phosphate + ADP. It participates in metabolic intermediate biosynthesis; acetyl-CoA biosynthesis; acetyl-CoA from acetate: step 1/2. In terms of biological role, catalyzes the formation of acetyl phosphate from acetate and ATP. Can also catalyze the reverse reaction. The chain is Acetate kinase from Phocaeicola vulgatus (strain ATCC 8482 / DSM 1447 / JCM 5826 / CCUG 4940 / NBRC 14291 / NCTC 11154) (Bacteroides vulgatus).